A 157-amino-acid chain; its full sequence is Cyclic pyranopterin monophosphate synthase (157 aa).

Substrate is bound by residues 73-75 and 110-111; these read LCH and ME. Aspartate 125 is a catalytic residue.

This sequence belongs to the MoaC family. In terms of assembly, homohexamer; trimer of dimers.

It catalyses the reaction (8S)-3',8-cyclo-7,8-dihydroguanosine 5'-triphosphate = cyclic pyranopterin phosphate + diphosphate. It participates in cofactor biosynthesis; molybdopterin biosynthesis. In terms of biological role, catalyzes the conversion of (8S)-3',8-cyclo-7,8-dihydroguanosine 5'-triphosphate to cyclic pyranopterin monophosphate (cPMP). The sequence is that of Cyclic pyranopterin monophosphate synthase from Pseudomonas fluorescens (strain SBW25).